The sequence spans 255 residues: Myogenic factor 5 (255 aa).

Positions 83–134 (DRRKAATMRERRRLKKVNQAFDTLKRCTTTNPNQRLPKVEILRNAIRYIESL) constitute a bHLH domain. The tract at residues 217–249 (SEQPGLPLQDPASLSPVASTDSQPATPGASSSR) is disordered. Polar residues predominate over residues 232–249 (PVASTDSQPATPGASSSR).

In terms of assembly, efficient DNA binding requires dimerization with another bHLH protein.

It localises to the nucleus. Acts as a transcriptional activator that promotes transcription of muscle-specific target genes and plays a role in muscle differentiation. Together with MYOG and MYOD1, co-occupies muscle-specific gene promoter core region during myogenesis. Induces fibroblasts to differentiate into myoblasts. Probable sequence specific DNA-binding protein. The sequence is that of Myogenic factor 5 (MYF5) from Bos taurus (Bovine).